Here is a 357-residue protein sequence, read N- to C-terminus: 3-isopropylmalate dehydrogenase (357 aa).

76 to 89 (GPQWDTIDPALRPE) provides a ligand contact to NAD(+). Residues arginine 96, arginine 106, arginine 134, and aspartate 224 each contribute to the substrate site. Residues aspartate 224, aspartate 248, and aspartate 252 each contribute to the Mg(2+) site. 282-294 (GSAPDIAGKGIAN) is a binding site for NAD(+).

It belongs to the isocitrate and isopropylmalate dehydrogenases family. LeuB type 1 subfamily. In terms of assembly, homodimer. Mg(2+) serves as cofactor. Requires Mn(2+) as cofactor.

It is found in the cytoplasm. The catalysed reaction is (2R,3S)-3-isopropylmalate + NAD(+) = 4-methyl-2-oxopentanoate + CO2 + NADH. Its pathway is amino-acid biosynthesis; L-leucine biosynthesis; L-leucine from 3-methyl-2-oxobutanoate: step 3/4. Catalyzes the oxidation of 3-carboxy-2-hydroxy-4-methylpentanoate (3-isopropylmalate) to 3-carboxy-4-methyl-2-oxopentanoate. The product decarboxylates to 4-methyl-2 oxopentanoate. The chain is 3-isopropylmalate dehydrogenase from Xanthomonas axonopodis pv. citri (strain 306).